The sequence spans 644 residues: 1,4-alpha-glucan branching enzyme GlgB (644 aa).

The active-site Nucleophile is the Asp-309. Glu-362 functions as the Proton donor in the catalytic mechanism.

Belongs to the glycosyl hydrolase 13 family. GlgB subfamily. As to quaternary structure, monomer.

The catalysed reaction is Transfers a segment of a (1-&gt;4)-alpha-D-glucan chain to a primary hydroxy group in a similar glucan chain.. The protein operates within glycan biosynthesis; glycogen biosynthesis. In terms of biological role, catalyzes the formation of the alpha-1,6-glucosidic linkages in glycogen by scission of a 1,4-alpha-linked oligosaccharide from growing alpha-1,4-glucan chains and the subsequent attachment of the oligosaccharide to the alpha-1,6 position. This Cutibacterium acnes (strain DSM 16379 / KPA171202) (Propionibacterium acnes) protein is 1,4-alpha-glucan branching enzyme GlgB.